A 129-amino-acid polypeptide reads, in one-letter code: N16.5 matrix protein (129 aa).

An N-terminal signal peptide occupies residues Met-1 to Pro-23. 5 repeat units span residues Asn-91–Gly-92, Asn-93–Gly-94, Asn-95–Gly-96, Asn-97–Gly-98, and Asn-99–Gly-100. The tract at residues Asn-91–Gly-100 is 5 X 2 AA tandem repeats of N-G.

It belongs to the N16 matrix protein family. In terms of assembly, heterooligomer; disulfide-linked. Pif97, Pif80, N16 and other proteins form a complex. As to expression, component of conchiolin, the organic matrix of nacre. Specifically expressed in mantle epithelium.

The protein resides in the secreted. The protein localises to the extracellular space. Its subcellular location is the extracellular matrix. Functionally, may be specifically involved in the formation of the nacreous layer. The polypeptide is N16.5 matrix protein (Pinctada fucata (Akoya pearl oyster)).